Here is a 305-residue protein sequence, read N- to C-terminus: Secreted mono- and diacylglycerol lipase A (305 aa).

The first 26 residues, 1–26 (MRLSFFTALSAVASLGYALPGKLQSR), serve as a signal peptide directing secretion. 2 disulfide bridges follow: Cys62-Cys67 and Cys129-Cys132. Ser171 functions as the Nucleophile in the catalytic mechanism. Asp225 functions as the Charge relay system in the catalytic mechanism. Asn251 carries N-linked (GlcNAc...) asparagine glycosylation. The Charge relay system role is filled by His285. Positions 303–305 (KRV) are cleaved as a propeptide — removed in mature form.

Belongs to the AB hydrolase superfamily. Lipase family. Class 3 subfamily. Post-translationally, multiple forms of this lipase are due to the presence of different carbohydrates, which may contribute to the stability of this lipase but not to the enzyme activity.

The protein localises to the secreted. It catalyses the reaction a monoacylglycerol + H2O = glycerol + a fatty acid + H(+). It carries out the reaction a diacylglycerol + H2O = a monoacylglycerol + a fatty acid + H(+). Its activity is regulated as follows. Both Fe(3+) and Hg(2+) inhibit the activity significantly. Its function is as follows. Secreted lipase strictly specific to mono- and diacylglycerol, but not triacylglycerol. Hydrolyzes long-chain monoacylglycerols most efficiently with the highest activities observed on 1- and 3- monopalmitoyl-sn-glycerol or 1-monostearoyl-rac-glycerol. Prefers to attack alpha positions to beta positions of monoacylglycerol, but shows no stereospecificity on mono- and diacylglycerol. This is Secreted mono- and diacylglycerol lipase A from Penicillium camembertii.